Consider the following 380-residue polypeptide: Queuine tRNA-ribosyltransferase (380 aa).

The active-site Proton acceptor is the Asp-95. Substrate contacts are provided by residues 95 to 99 (DSGGF), Asp-149, Gln-192, and Gly-219. An RNA binding region spans residues 250–256 (GVGSPDS). Asp-269 serves as the catalytic Nucleophile. The RNA binding; important for wobble base 34 recognition stretch occupies residues 274–278 (TRIGR). Residues Cys-307, Cys-309, Cys-312, and His-338 each contribute to the Zn(2+) site.

Belongs to the queuine tRNA-ribosyltransferase family. Homodimer. Within each dimer, one monomer is responsible for RNA recognition and catalysis, while the other monomer binds to the replacement base PreQ1. Zn(2+) is required as a cofactor.

It catalyses the reaction 7-aminomethyl-7-carbaguanine + guanosine(34) in tRNA = 7-aminomethyl-7-carbaguanosine(34) in tRNA + guanine. Its pathway is tRNA modification; tRNA-queuosine biosynthesis. Functionally, catalyzes the base-exchange of a guanine (G) residue with the queuine precursor 7-aminomethyl-7-deazaguanine (PreQ1) at position 34 (anticodon wobble position) in tRNAs with GU(N) anticodons (tRNA-Asp, -Asn, -His and -Tyr). Catalysis occurs through a double-displacement mechanism. The nucleophile active site attacks the C1' of nucleotide 34 to detach the guanine base from the RNA, forming a covalent enzyme-RNA intermediate. The proton acceptor active site deprotonates the incoming PreQ1, allowing a nucleophilic attack on the C1' of the ribose to form the product. After dissociation, two additional enzymatic reactions on the tRNA convert PreQ1 to queuine (Q), resulting in the hypermodified nucleoside queuosine (7-(((4,5-cis-dihydroxy-2-cyclopenten-1-yl)amino)methyl)-7-deazaguanosine). The protein is Queuine tRNA-ribosyltransferase of Geobacillus thermodenitrificans (strain NG80-2).